A 292-amino-acid polypeptide reads, in one-letter code: Homoserine kinase (292 aa).

Position 81–91 (81–91 (RPRSGLGSSGA)) interacts with ATP.

The protein belongs to the GHMP kinase family. Homoserine kinase subfamily.

It is found in the cytoplasm. The catalysed reaction is L-homoserine + ATP = O-phospho-L-homoserine + ADP + H(+). The protein operates within amino-acid biosynthesis; L-threonine biosynthesis; L-threonine from L-aspartate: step 4/5. Its function is as follows. Catalyzes the ATP-dependent phosphorylation of L-homoserine to L-homoserine phosphate. The polypeptide is Homoserine kinase (Thermococcus kodakarensis (strain ATCC BAA-918 / JCM 12380 / KOD1) (Pyrococcus kodakaraensis (strain KOD1))).